Reading from the N-terminus, the 148-residue chain is Sec-independent protein translocase protein TatB (148 aa).

Residues 1 to 21 (MFDIGFWELVVIGIVALVVLG) traverse the membrane as a helical segment.

Belongs to the TatB family. In terms of assembly, the Tat system comprises two distinct complexes: a TatABC complex, containing multiple copies of TatA, TatB and TatC subunits, and a separate TatA complex, containing only TatA subunits. Substrates initially bind to the TatABC complex, which probably triggers association of the separate TatA complex to form the active translocon.

The protein resides in the cell inner membrane. Its function is as follows. Part of the twin-arginine translocation (Tat) system that transports large folded proteins containing a characteristic twin-arginine motif in their signal peptide across membranes. Together with TatC, TatB is part of a receptor directly interacting with Tat signal peptides. TatB may form an oligomeric binding site that transiently accommodates folded Tat precursor proteins before their translocation. The polypeptide is Sec-independent protein translocase protein TatB (Aeromonas salmonicida (strain A449)).